The chain runs to 471 residues: UDP-N-acetylmuramoylalanine--D-glutamate ligase (471 aa).

Residue 122-128 coordinates ATP; that stretch reads GSNAKST.

This sequence belongs to the MurCDEF family.

It is found in the cytoplasm. It catalyses the reaction UDP-N-acetyl-alpha-D-muramoyl-L-alanine + D-glutamate + ATP = UDP-N-acetyl-alpha-D-muramoyl-L-alanyl-D-glutamate + ADP + phosphate + H(+). Its pathway is cell wall biogenesis; peptidoglycan biosynthesis. Cell wall formation. Catalyzes the addition of glutamate to the nucleotide precursor UDP-N-acetylmuramoyl-L-alanine (UMA). The chain is UDP-N-acetylmuramoylalanine--D-glutamate ligase from Psychrobacter cryohalolentis (strain ATCC BAA-1226 / DSM 17306 / VKM B-2378 / K5).